The sequence spans 446 residues: Packaging protein 1 (446 aa).

A compositionally biased stretch (basic residues) spans 1 to 10 (METRGRRRAF). Residues 1–74 (METRGRRRAF…PSQPPQPRSL (74 aa)) are disordered. 170–177 (GPTGCGKS) serves as a coordination point for ATP. The DNA-binding stretch occupies residues 439-446 (RAYRKRNK).

It belongs to the adenoviridae packaging protein 1 family. Homodimer. Part of a genome packaging complex composed of packaging proteins 1, 2 and 3; this complex specifically binds to the packaging sequence on the left end of viral genomic DNA and performs packaging of the viral genome. Interacts with protein 33K.

Its subcellular location is the virion. The protein resides in the host nucleus. It is found in the host nucleoplasm. It localises to the host nucleolus. Functionally, component of the packaging machinery which encapsidates the viral DNA into preformed capsids and transcriptional activator of the viral major late promoter (MLP). Binds, along with packaging proteins 2 and 3, to the specific packaging sequence on the left end of viral genomic DNA and displays ATPase activity thereby providing the power stroke of the packaging machinery. The activity of packaging protein IVa2 is stimulated by protein 33K which acts as a terminase. May be the protein that pumps DNA into the capsid powered by ATP hydrolysis. Specifically binds to the 5'-CG-3' nucleotides of the repeats making up the packaging sequence. Component of the DEF-A and DEF-B transcription factors that bind downstream elements of the major late promoter (MLP), and stimulate transcription from the MLP after initiation of viral DNA replication. DEF-A is a heterodimer packaging proteins 1 and 2 and DEF-B is a homodimer of packaging protein 1. The sequence is that of Packaging protein 1 from Human adenovirus F serotype 40 (HAdV-40).